Here is a 296-residue protein sequence, read N- to C-terminus: Glycine--tRNA ligase alpha subunit (296 aa).

This sequence belongs to the class-II aminoacyl-tRNA synthetase family. As to quaternary structure, tetramer of two alpha and two beta subunits.

It localises to the cytoplasm. It catalyses the reaction tRNA(Gly) + glycine + ATP = glycyl-tRNA(Gly) + AMP + diphosphate. The polypeptide is Glycine--tRNA ligase alpha subunit (Listeria monocytogenes serotype 4b (strain CLIP80459)).